A 310-amino-acid chain; its full sequence is HPr kinase/phosphorylase (310 aa).

Residues histidine 136 and lysine 157 contribute to the active site. Residue 151-158 (GDSGIGKS) coordinates ATP. Serine 158 serves as a coordination point for Mg(2+). Aspartate 175 acts as the Proton acceptor; for phosphorylation activity. Proton donor; for dephosphorylation activity in catalysis. Residues 199–208 (LEIRGLGIIN) form an important for the catalytic mechanism of both phosphorylation and dephosphorylation region. Glutamate 200 is a binding site for Mg(2+). Arginine 241 is a catalytic residue. The tract at residues 262–267 (PVRPGR) is important for the catalytic mechanism of dephosphorylation.

It belongs to the HPrK/P family. In terms of assembly, homohexamer. Requires Mg(2+) as cofactor.

The enzyme catalyses [HPr protein]-L-serine + ATP = [HPr protein]-O-phospho-L-serine + ADP + H(+). It catalyses the reaction [HPr protein]-O-phospho-L-serine + phosphate + H(+) = [HPr protein]-L-serine + diphosphate. In terms of biological role, catalyzes the ATP- as well as the pyrophosphate-dependent phosphorylation of a specific serine residue in HPr, a phosphocarrier protein of the phosphoenolpyruvate-dependent sugar phosphotransferase system (PTS). HprK/P also catalyzes the pyrophosphate-producing, inorganic phosphate-dependent dephosphorylation (phosphorolysis) of seryl-phosphorylated HPr (P-Ser-HPr). The two antagonistic activities of HprK/P are regulated by several intracellular metabolites, which change their concentration in response to the absence or presence of rapidly metabolisable carbon sources (glucose, fructose, etc.) in the growth medium. Therefore, by controlling the phosphorylation state of HPr, HPrK/P is a sensor enzyme that plays a major role in the regulation of carbon metabolism and sugar transport: it mediates carbon catabolite repression (CCR), and regulates PTS-catalyzed carbohydrate uptake and inducer exclusion. The protein is HPr kinase/phosphorylase of Staphylococcus aureus (strain Mu3 / ATCC 700698).